The following is a 345-amino-acid chain: Phosphoribosylformylglycinamidine cyclo-ligase (345 aa).

The protein belongs to the AIR synthase family.

It is found in the cytoplasm. The catalysed reaction is 2-formamido-N(1)-(5-O-phospho-beta-D-ribosyl)acetamidine + ATP = 5-amino-1-(5-phospho-beta-D-ribosyl)imidazole + ADP + phosphate + H(+). Its pathway is purine metabolism; IMP biosynthesis via de novo pathway; 5-amino-1-(5-phospho-D-ribosyl)imidazole from N(2)-formyl-N(1)-(5-phospho-D-ribosyl)glycinamide: step 2/2. This Shouchella clausii (strain KSM-K16) (Alkalihalobacillus clausii) protein is Phosphoribosylformylglycinamidine cyclo-ligase.